A 130-amino-acid chain; its full sequence is uncharacterized protein (130 aa).

The N-terminal stretch at 1-23 is a signal peptide; the sequence is MINRKVVYALSALLLFVYSYAFI.

This is an uncharacterized protein from Aquifex aeolicus (strain VF5).